Here is a 487-residue protein sequence, read N- to C-terminus: G-patch domain and KOW motifs-containing protein (487 aa).

Disordered regions lie at residues 65 to 121 (HKNR…PLLM), 181 to 232 (VKPL…TGSA), and 295 to 367 (KVHQ…RPEP). Residues 88-116 (AVLSQAVKELIEESRRAQEDNSETNQTLS) adopt a coiled-coil conformation. 2 stretches are compositionally biased toward basic and acidic residues: residues 96-106 (ELIEESRRAQE) and 200-209 (SALKHLEPQK). The G-patch domain maps to 154–200 (VQQYGMAMLRGMGWKEGEGIGRTFKQDVKPLEQKLRPKGLGLGADRS). The KOW 1 domain maps to 226–253 (GLGTGSAVQIQSGAYKDMYGKVEGIDPD). 2 stretches are compositionally biased toward basic and acidic residues: residues 295–333 (KVHQ…DVKL) and 352–367 (RSPE…RPEP). The region spanning 428–455 (PKEEGEHVMVVLGKYRGMVGKILHRDKQ) is the KOW 2 domain.

The protein belongs to the MOS2 family. Component of the minor spliceosome, which splices U12-type introns.

Its subcellular location is the nucleus. Its function is as follows. RNA-binding protein involved in pre-mRNA splicing. This Xenopus laevis (African clawed frog) protein is G-patch domain and KOW motifs-containing protein (gpkow).